Reading from the N-terminus, the 180-residue chain is Large ribosomal subunit protein uL5 (180 aa).

Belongs to the universal ribosomal protein uL5 family. In terms of assembly, part of the 50S ribosomal subunit; part of the 5S rRNA/L5/L18/L25 subcomplex. Contacts the 5S rRNA and the P site tRNA. Forms a bridge to the 30S subunit in the 70S ribosome.

Functionally, this is one of the proteins that bind and probably mediate the attachment of the 5S RNA into the large ribosomal subunit, where it forms part of the central protuberance. In the 70S ribosome it contacts protein S13 of the 30S subunit (bridge B1b), connecting the 2 subunits; this bridge is implicated in subunit movement. Contacts the P site tRNA; the 5S rRNA and some of its associated proteins might help stabilize positioning of ribosome-bound tRNAs. This is Large ribosomal subunit protein uL5 from Limosilactobacillus reuteri (strain DSM 20016) (Lactobacillus reuteri).